The chain runs to 43 residues: Cytochrome b559 subunit beta (43 aa).

The chain crosses the membrane as a helical span at residues 18-34; the sequence is WLSVHALGIPTIFFLGA. Residue histidine 22 coordinates heme.

The protein belongs to the PsbE/PsbF family. Heterodimer of an alpha subunit and a beta subunit. PSII is composed of 1 copy each of membrane proteins PsbA, PsbB, PsbC, PsbD, PsbE, PsbF, PsbH, PsbI, PsbJ, PsbK, PsbL, PsbM, PsbT, PsbX, PsbY, PsbZ, Psb30/Ycf12, at least 3 peripheral proteins of the oxygen-evolving complex and a large number of cofactors. It forms dimeric complexes. Heme b serves as cofactor.

The protein localises to the plastid. The protein resides in the chloroplast thylakoid membrane. This b-type cytochrome is tightly associated with the reaction center of photosystem II (PSII). PSII is a light-driven water:plastoquinone oxidoreductase that uses light energy to abstract electrons from H(2)O, generating O(2) and a proton gradient subsequently used for ATP formation. It consists of a core antenna complex that captures photons, and an electron transfer chain that converts photonic excitation into a charge separation. The sequence is that of Cytochrome b559 subunit beta from Stigeoclonium helveticum (Green alga).